Consider the following 434-residue polypeptide: MQVSVETTQGLGRRVTITVAADIIESAVKSELVNAAKKVRIDGFRKGKVPMNVVAQRYGASVRQDVLGDLMQRNFVDAIIKEKINPVGAPNYIPGEYAVGGDFTYSVEFEVYPEVELKGLDAIEVEKPVVEVTDADVDTMLETLRKQQATWKETDRAAAAEDRVTIDFTGSIDGEVFEGGKASDFVLAMGQNRMIPGFEDGVVGHKAGEEFTIDVNFPEDYHAENLKGKAAQFAIVLKKVEERELPELTEEFIKRFGVADGSQEGLRAEVRKNMERELKGAVRNRVKTQVLDGLINANEIDVPAALIDGEIDVLRRQAAQRFGGNEKQAQELPRELFEEQAKRRVVIGLLLGEVISSNELKADEARVNALIEEMASAYEDPQEVIEFYGKNKELLNNMRNVALEEQAVETVLAKAKVVEKSVSFNELMNQTATA.

The PPIase FKBP-type domain occupies 161–246 (EDRVTIDFTG…LKKVEERELP (86 aa)).

Belongs to the FKBP-type PPIase family. Tig subfamily.

It localises to the cytoplasm. The catalysed reaction is [protein]-peptidylproline (omega=180) = [protein]-peptidylproline (omega=0). Involved in protein export. Acts as a chaperone by maintaining the newly synthesized protein in an open conformation. Functions as a peptidyl-prolyl cis-trans isomerase. In Pectobacterium carotovorum subsp. carotovorum (strain PC1), this protein is Trigger factor.